The chain runs to 334 residues: Probable GTP 3',8-cyclase (334 aa).

Residues 24–256 (PYGRKVTGLR…RKKYIIDGVE (233 aa)) enclose the Radical SAM core domain. Arginine 33 provides a ligand contact to GTP. [4Fe-4S] cluster contacts are provided by cysteine 40 and cysteine 44. S-adenosyl-L-methionine is bound at residue tyrosine 46. Cysteine 47 lines the [4Fe-4S] cluster pocket. Residue lysine 85 coordinates GTP. Residue glycine 89 participates in S-adenosyl-L-methionine binding. Threonine 113 is a binding site for GTP. Residue serine 137 coordinates S-adenosyl-L-methionine. Lysine 176 serves as a coordination point for GTP. Residues cysteine 269 and cysteine 272 each contribute to the [4Fe-4S] cluster site. 274–276 (RLR) lines the GTP pocket. A [4Fe-4S] cluster-binding site is contributed by cysteine 286.

This sequence belongs to the radical SAM superfamily. MoaA family. [4Fe-4S] cluster serves as cofactor.

It carries out the reaction GTP + AH2 + S-adenosyl-L-methionine = (8S)-3',8-cyclo-7,8-dihydroguanosine 5'-triphosphate + 5'-deoxyadenosine + L-methionine + A + H(+). It functions in the pathway cofactor biosynthesis; molybdopterin biosynthesis. Functionally, catalyzes the cyclization of GTP to (8S)-3',8-cyclo-7,8-dihydroguanosine 5'-triphosphate. This Methanosarcina acetivorans (strain ATCC 35395 / DSM 2834 / JCM 12185 / C2A) protein is Probable GTP 3',8-cyclase.